The following is a 184-amino-acid chain: Fruit protein pKIWI501 (184 aa).

The segment at 1–184 is disordered; that stretch reads MATVEVTPAV…TEVPVDKTEE (184 aa). Low complexity-rich tracts occupy residues 25 to 36 and 53 to 65; these read PQEPQPEAAVAA and PEAVEAPEEPAAT. The segment covering 72–92 has biased composition (acidic residues); the sequence is EVAEAEEEVVEEPQEVPEEPV. Over residues 96-119 the composition is skewed to basic and acidic residues; it reads AAKEVEATEGKAEPTGEMKDKTPE. The segment covering 120-156 has biased composition (low complexity); it reads ATDAPEAPAAAEEPTDAPEAPAVAEEPTNAPEAPAVG. A compositionally biased stretch (basic and acidic residues) spans 159-168; sequence PEAKEGKPDE.

The protein to H.brasiliensis latex allergen Hev b 5.

The sequence is that of Fruit protein pKIWI501 from Actinidia deliciosa (Kiwi).